A 208-amino-acid polypeptide reads, in one-letter code: Guanylate kinase (208 aa).

A Guanylate kinase-like domain is found at 5–184 (GLLIVFSGPS…AAERVKCVIE (180 aa)). Position 12-19 (12-19 (GPSGVGKG)) interacts with ATP.

Belongs to the guanylate kinase family.

It is found in the cytoplasm. The enzyme catalyses GMP + ATP = GDP + ADP. Essential for recycling GMP and indirectly, cGMP. The sequence is that of Guanylate kinase from Streptococcus pneumoniae (strain ATCC BAA-255 / R6).